The sequence spans 468 residues: UDP-N-acetylmuramoyl-L-alanine--L-glutamate ligase (468 aa).

An ATP-binding site is contributed by 122–128 (GTKGKST).

Belongs to the MurCDEF family. MurD2 subfamily.

The protein localises to the cytoplasm. The catalysed reaction is UDP-N-acetyl-alpha-D-muramoyl-L-alanine + L-glutamate + ATP = UDP-N-acetyl-alpha-D-muramoyl-L-alanyl-L-glutamate + ADP + phosphate + H(+). The protein operates within cell wall biogenesis; peptidoglycan biosynthesis. In terms of biological role, cell wall formation. Catalyzes the addition of L-glutamate to the nucleotide precursor UDP-N-acetylmuramoyl-L-alanine. The protein is UDP-N-acetylmuramoyl-L-alanine--L-glutamate ligase of Xanthomonas euvesicatoria pv. vesicatoria (strain 85-10) (Xanthomonas campestris pv. vesicatoria).